The chain runs to 212 residues: Thymidylate kinase (212 aa).

11–18 contributes to the ATP binding site; that stretch reads GPEGAGKT.

Belongs to the thymidylate kinase family.

It catalyses the reaction dTMP + ATP = dTDP + ADP. Phosphorylation of dTMP to form dTDP in both de novo and salvage pathways of dTTP synthesis. This is Thymidylate kinase from Streptococcus pneumoniae serotype 2 (strain D39 / NCTC 7466).